The primary structure comprises 35 residues: Cecropin-B (35 aa).

The residue at position 35 (Leu35) is a Leucine amide.

Belongs to the cecropin family.

It localises to the secreted. Cecropins have lytic and antibacterial activity against several Gram-positive and Gram-negative bacteria. The chain is Cecropin-B from Antheraea pernyi (Chinese oak silk moth).